Here is a 307-residue protein sequence, read N- to C-terminus: tRNA pseudouridine synthase B (307 aa).

Asp48 serves as the catalytic Nucleophile.

This sequence belongs to the pseudouridine synthase TruB family. Type 1 subfamily.

The catalysed reaction is uridine(55) in tRNA = pseudouridine(55) in tRNA. In terms of biological role, responsible for synthesis of pseudouridine from uracil-55 in the psi GC loop of transfer RNAs. The chain is tRNA pseudouridine synthase B from Pasteurella multocida (strain Pm70).